The chain runs to 363 residues: Insulin gene enhancer protein ISL-3 (363 aa).

LIM zinc-binding domains are found at residues 27–80 and 89–143; these read CVGC…CKRD and CAKC…RADH. The segment at residues 191 to 250 is a DNA-binding region (homeobox); the sequence is TTRVRTVLNEKQLHTLRTCYNANPRPDALMREQLVEMTGLSPRVIRVWFQNKRCKDKKRS. The interval 328 to 363 is disordered; the sequence is FSESGSLGNSSGSDVTSLSSHLPDTPNSMVPSPVET. The segment covering 329–340 has biased composition (low complexity); it reads SESGSLGNSSGS. Residues 341–363 show a composition bias toward polar residues; it reads DVTSLSSHLPDTPNSMVPSPVET.

Its subcellular location is the nucleus. In terms of biological role, binds to one of the cis-acting domain of the insulin gene enhancer. May be involved in subtype specialization of primary motoneurons. In Oncorhynchus tshawytscha (Chinook salmon), this protein is Insulin gene enhancer protein ISL-3 (isl3).